The following is a 207-amino-acid chain: Large ribosomal subunit protein bL25 (207 aa).

The protein belongs to the bacterial ribosomal protein bL25 family. CTC subfamily. Part of the 50S ribosomal subunit; part of the 5S rRNA/L5/L18/L25 subcomplex. Contacts the 5S rRNA. Binds to the 5S rRNA independently of L5 and L18.

Functionally, this is one of the proteins that binds to the 5S RNA in the ribosome where it forms part of the central protuberance. The sequence is that of Large ribosomal subunit protein bL25 from Orientia tsutsugamushi (strain Boryong) (Rickettsia tsutsugamushi).